Consider the following 105-residue polypeptide: U2-lycotoxin-Ls1b (105 aa).

An N-terminal signal peptide occupies residues 1-17; sequence MIKYVLISALLVVAVYS. Residues 18-41 constitute a propeptide that is removed on maturation; it reads FTIEDNEDALLEEAEDELDTEEER. Intrachain disulfides connect C51–C67, C58–C97, C60–C83, and C69–C81.

The protein belongs to the neurotoxin 04 (omega-agtx) family. 01 (type I omega-agtx) subfamily. In terms of tissue distribution, expressed by the venom gland.

It localises to the secreted. Insecticidal to house crickets. It induces an excitatory slow-onset impact that leads to irreversible spastic paralysis. It also modifies human voltage-gated potassium channel Kv1.5/KCNA5. Most likely, it binds to the voltage-sensing domain of the channel, suggesting it does not block the pore but prevents its opening at physiological membrane potentials. The recombinant peptide binds to the channel in an irreversible manner and slows down the hKv1.5 current activation kinetics. It is not toxic to mice, when intracranially injected (at 0.5 ug/g mouse). The chain is U2-lycotoxin-Ls1b from Lycosa singoriensis (Wolf spider).